Here is a 150-residue protein sequence, read N- to C-terminus: Nucleoside diphosphate kinase (150 aa).

Lys9, Phe57, Arg85, Thr91, Arg102, and Asn112 together coordinate ATP. His115 serves as the catalytic Pros-phosphohistidine intermediate.

The protein belongs to the NDK family. It depends on Mg(2+) as a cofactor.

The protein localises to the cytoplasm. The catalysed reaction is a 2'-deoxyribonucleoside 5'-diphosphate + ATP = a 2'-deoxyribonucleoside 5'-triphosphate + ADP. The enzyme catalyses a ribonucleoside 5'-diphosphate + ATP = a ribonucleoside 5'-triphosphate + ADP. In terms of biological role, major role in the synthesis of nucleoside triphosphates other than ATP. The ATP gamma phosphate is transferred to the NDP beta phosphate via a ping-pong mechanism, using a phosphorylated active-site intermediate. The protein is Nucleoside diphosphate kinase of Methanothermobacter thermautotrophicus (strain ATCC 29096 / DSM 1053 / JCM 10044 / NBRC 100330 / Delta H) (Methanobacterium thermoautotrophicum).